The chain runs to 298 residues: GTPase Era (298 aa).

In terms of domain architecture, Era-type G spans 8-176 (RSGSVAVIGR…VSDLLKLVPE (169 aa)). Positions 16-23 (GRPNVGKS) are G1. Residue 16–23 (GRPNVGKS) participates in GTP binding. A G2 region spans residues 42 to 46 (QTTRH). The segment at 63 to 66 (DTPG) is G3. Residues 63 to 67 (DTPGL) and 125 to 128 (NKVD) contribute to the GTP site. Positions 125-128 (NKVD) are G4. A G5 region spans residues 155–157 (VSA). The KH type-2 domain maps to 199 to 283 (VREQLMRQLG…FLETWVRVRE (85 aa)).

It belongs to the TRAFAC class TrmE-Era-EngA-EngB-Septin-like GTPase superfamily. Era GTPase family. Monomer.

Its subcellular location is the cytoplasm. It localises to the cell inner membrane. Its function is as follows. An essential GTPase that binds both GDP and GTP, with rapid nucleotide exchange. Plays a role in 16S rRNA processing and 30S ribosomal subunit biogenesis and possibly also in cell cycle regulation and energy metabolism. The chain is GTPase Era from Xanthomonas campestris pv. campestris (strain 8004).